The following is a 107-amino-acid chain: Pyrimidine/purine nucleoside phosphorylase (107 aa).

Belongs to the nucleoside phosphorylase PpnP family.

It catalyses the reaction a purine D-ribonucleoside + phosphate = a purine nucleobase + alpha-D-ribose 1-phosphate. The enzyme catalyses adenosine + phosphate = alpha-D-ribose 1-phosphate + adenine. The catalysed reaction is cytidine + phosphate = cytosine + alpha-D-ribose 1-phosphate. It carries out the reaction guanosine + phosphate = alpha-D-ribose 1-phosphate + guanine. It catalyses the reaction inosine + phosphate = alpha-D-ribose 1-phosphate + hypoxanthine. The enzyme catalyses thymidine + phosphate = 2-deoxy-alpha-D-ribose 1-phosphate + thymine. The catalysed reaction is uridine + phosphate = alpha-D-ribose 1-phosphate + uracil. It carries out the reaction xanthosine + phosphate = alpha-D-ribose 1-phosphate + xanthine. Functionally, catalyzes the phosphorolysis of diverse nucleosides, yielding D-ribose 1-phosphate and the respective free bases. Can use uridine, adenosine, guanosine, cytidine, thymidine, inosine and xanthosine as substrates. Also catalyzes the reverse reactions. The sequence is that of Pyrimidine/purine nucleoside phosphorylase from Aromatoleum aromaticum (strain DSM 19018 / LMG 30748 / EbN1) (Azoarcus sp. (strain EbN1)).